The sequence spans 561 residues: DNA ligase B (561 aa).

The N6-AMP-lysine intermediate role is filled by Lys125.

This sequence belongs to the NAD-dependent DNA ligase family. LigB subfamily.

The enzyme catalyses NAD(+) + (deoxyribonucleotide)n-3'-hydroxyl + 5'-phospho-(deoxyribonucleotide)m = (deoxyribonucleotide)n+m + AMP + beta-nicotinamide D-nucleotide.. Catalyzes the formation of phosphodiester linkages between 5'-phosphoryl and 3'-hydroxyl groups in double-stranded DNA using NAD as a coenzyme and as the energy source for the reaction. The polypeptide is DNA ligase B (Salmonella arizonae (strain ATCC BAA-731 / CDC346-86 / RSK2980)).